A 586-amino-acid polypeptide reads, in one-letter code: Protein HOL1 (586 aa).

Topologically, residues 1 to 66 are extracellular; it reads MDKYTNRDHP…NWSSWRKLAH (66 aa). A helical transmembrane segment spans residues 67 to 87; sequence FGLMAFITAFTAATSNDAGAA. Residues 88 to 103 lie on the Cytoplasmic side of the membrane; it reads QDSLNEIYGISYDSMN. Residues 104-124 form a helical membrane-spanning segment; the sequence is TGAGVLFLGIGWSTLFLAPFA. At 125-130 the chain is on the extracellular side; it reads NLYGRK. The chain crosses the membrane as a helical span at residues 131 to 151; that stretch reads ITYIVCTTLGLFGALWFALAK. Residues 152-189 are Cytoplasmic-facing; the sequence is RTSDTIWSQLFVGISESCAEAQVQLSLSDIFFQHQLGS. The helical transmembrane segment at 190-210 threads the bilayer; sequence VLTVYIMCTSIGTFLGPLIAG. The Extracellular portion of the chain corresponds to 211–219; it reads YISAFTNFR. A helical transmembrane segment spans residues 220 to 240; sequence WVGWVAVIISGGLLITIIFGC. Residues 241 to 362 lie on the Cytoplasmic side of the membrane; that stretch reads EETYFDRGQY…YFKYLKINLR (122 aa). Residues 363–383 form a helical membrane-spanning segment; that stretch reads MFLFPPVWLSGMFWGIQDVFL. Over 384 to 413 the chain is Extracellular; it reads TFYLTTQESAYYEPPWNYSDFGVAIMNVPT. A helical membrane pass occupies residues 414 to 434; the sequence is LIGAVIGCICAGIVSDYFVLW. At 435–448 the chain is on the cytoplasmic side; sequence MARHNRGILEAEFR. Residues 449 to 469 form a helical membrane-spanning segment; it reads LYFSIATAIIGPAGLLMFGIG. Over 470–477 the chain is Extracellular; the sequence is TARQWPWQ. Residues 478-498 traverse the membrane as a helical segment; sequence AIYVGLGFVGFAWGCSGDIAM. The Cytoplasmic segment spans residues 499–508; that stretch reads AYLMDCYPDM. A helical membrane pass occupies residues 509 to 529; it reads VLEGMVCTAIINNTISCIFTF. Residues 530-544 are Extracellular-facing; sequence TCSDWLAASGTENTY. A helical transmembrane segment spans residues 545–565; sequence IALAVINFGITAFALPMYYYG. The Cytoplasmic segment spans residues 566 to 586; that stretch reads KRIRLWTKRWYLQSVNLRDGV.

Its subcellular location is the membrane. Seems to be involved in the uptake of several cations and of histidinol. The protein is Protein HOL1 (HOL1) of Saccharomyces cerevisiae (strain ATCC 204508 / S288c) (Baker's yeast).